We begin with the raw amino-acid sequence, 452 residues long: Keratin, type I cytoskeletal 42 (452 aa).

Positions 4 to 93 (TTSVRQFSTS…GVSDALLGGS (90 aa)) are head. Residues 94 to 129 (EKETMQNLNDRLATYLDRVRALEEANADLEVKIREW) form a coil 1A region. Residues 94-405 (EKETMQNLND…RLLEGEDAHL (312 aa)) form the IF rod domain. The linker 1 stretch occupies residues 130-147 (YKKQGPGPARDYSPYFKT). Positions 148–239 (IEDLRNKILA…KNHEEEMNAL (92 aa)) are coil 1B. Residues 240–262 (RGQVGGDVNVEMDAAPGVDLSRI) are linker 12. The segment at 263-401 (LNEMRDQYEK…ATYRRLLEGE (139 aa)) is coil 2. The segment at 402-452 (DAHLATQYSSSLASQPSREGMVTSRQVRTIVEEVQDGKVVSSREQVHRSTH) is tail.

This sequence belongs to the intermediate filament family. Heterodimer of a type I and a type II keratin. Colocalizes with KRT8/KRT18 filament network. Expressed in nail matrix and nail bed epithelium (at protein level). Also expressed in tongue and digits with weak expression in vibrissae and in both filiform and fungiform papillae of oral mucosa.

The protein localises to the cytoplasm. The protein is Keratin, type I cytoskeletal 42 of Mus musculus (Mouse).